Here is a 649-residue protein sequence, read N- to C-terminus: Phospholipase A1 PLIP1, chloroplastic (649 aa).

Residues 1 to 67 (MAFNTAMAST…NNRILAVSVR (67 aa)) constitute a chloroplast transit peptide. The GXSXG signature appears at 420-424 (GHSLG). The active-site Acyl-ester intermediate is Ser-422. Catalysis depends on charge relay system residues Asp-483 and His-593.

Belongs to the AB hydrolase superfamily. Lipase family.

The protein resides in the plastid. Its subcellular location is the chloroplast thylakoid membrane. The catalysed reaction is a 1,2-diacyl-sn-glycero-3-phosphocholine + H2O = a 2-acyl-sn-glycero-3-phosphocholine + a fatty acid + H(+). It carries out the reaction a 1,2-diacyl-3-O-(beta-D-galactosyl)-sn-glycerol + 2 H2O = 3-beta-D-galactosyl-sn-glycerol + 2 a fatty acid + 2 H(+). Functionally, sn-1-specific phospholipase A1 involved in seed oil biosynthesis. Hydrolyzes polyunsaturated acyl groups from a unique chloroplast-specific phosphatidylglycerol (PG) that contains 16:1 delta 3-trans as its second acyl group. The polyunsaturated acyl groups released by PLIP1 are exported from the chloroplast, reincorporated into phosphatidylcholine (PC), and ultimately enter seed triacylglycerol (TAG). In vitro, possesses broad substrate specificity. Can hydrolyze the galactolipid monogalactosyldiacylglycerol (MGDG), and the phoshpolipids phosphatidylcholine (PC), phosphatidylethanolamine (PE), phosphatidic acid (PA), phosphatidylserine (PS) phosphatidylglycerol (PG) and phosphatidylinositol (PI). This chain is Phospholipase A1 PLIP1, chloroplastic, found in Arabidopsis thaliana (Mouse-ear cress).